The sequence spans 315 residues: Phosphatidylglycerol--prolipoprotein diacylglyceryl transferase (315 aa).

Transmembrane regions (helical) follow at residues 19 to 39 (FTIHMYAICILIGICVAVWIL) and 93 to 113 (VWEGGMAIFGGISVGTLVAFL). A 1,2-diacyl-sn-glycero-3-phospho-(1'-sn-glycerol) is bound at residue Arg141. Helical transmembrane passes span 188-208 (LFHPTFLYEMIWNLIGAALII) and 256-276 (VWTAIIVFVLGCILFVVLYQY).

The protein belongs to the Lgt family.

The protein resides in the cell membrane. The enzyme catalyses L-cysteinyl-[prolipoprotein] + a 1,2-diacyl-sn-glycero-3-phospho-(1'-sn-glycerol) = an S-1,2-diacyl-sn-glyceryl-L-cysteinyl-[prolipoprotein] + sn-glycerol 1-phosphate + H(+). Its pathway is protein modification; lipoprotein biosynthesis (diacylglyceryl transfer). In terms of biological role, catalyzes the transfer of the diacylglyceryl group from phosphatidylglycerol to the sulfhydryl group of the N-terminal cysteine of a prolipoprotein, the first step in the formation of mature lipoproteins. This chain is Phosphatidylglycerol--prolipoprotein diacylglyceryl transferase, found in Bifidobacterium longum (strain DJO10A).